The following is a 395-amino-acid chain: ATP phosphoribosyltransferase regulatory subunit (395 aa).

It belongs to the class-II aminoacyl-tRNA synthetase family. HisZ subfamily. Heteromultimer composed of HisG and HisZ subunits.

It localises to the cytoplasm. It participates in amino-acid biosynthesis; L-histidine biosynthesis; L-histidine from 5-phospho-alpha-D-ribose 1-diphosphate: step 1/9. Functionally, required for the first step of histidine biosynthesis. May allow the feedback regulation of ATP phosphoribosyltransferase activity by histidine. In Pseudomonas fluorescens (strain Pf0-1), this protein is ATP phosphoribosyltransferase regulatory subunit.